Consider the following 69-residue polypeptide: Ubiquitin-ribosomal protein eL40 fusion protein (69 aa).

The Ubiquitin-like domain occupies 1 to 17; that stretch reads NIQKESTLHLVLRLRGG. Residue Lys4 forms a Glycyl lysine isopeptide (Lys-Gly) (interchain with G-Cter in ubiquitin) linkage. A Glycyl lysine isopeptide (Gly-Lys) (interchain with K-? in acceptor proteins) cross-link involves residue Gly17. Position 39 is an N6,N6,N6-trimethyllysine (Lys39).

This sequence in the N-terminal section; belongs to the ubiquitin family. It in the C-terminal section; belongs to the eukaryotic ribosomal protein eL40 family. In terms of assembly, part of the 60S ribosomal subunit. Trimethylation of Lys-39 ('Lys-22' of the mature chain) by SMYD5 promotes translation elongation and protein synthesis.

The protein localises to the cytoplasm. It localises to the nucleus. Exists either covalently attached to another protein, or free (unanchored). When covalently bound, it is conjugated to target proteins via an isopeptide bond either as a monomer (monoubiquitin), a polymer linked via different Lys residues of the ubiquitin (polyubiquitin chains) or a linear polymer linked via the initiator Met of the ubiquitin (linear polyubiquitin chains). Polyubiquitin chains, when attached to a target protein, have different functions depending on the Lys residue of the ubiquitin that is linked: Lys-6-linked may be involved in DNA repair; Lys-11-linked is involved in ERAD (endoplasmic reticulum-associated degradation) and in cell-cycle regulation; Lys-29-linked is involved in proteotoxic stress response and cell cycle; Lys-33-linked is involved in kinase modification; Lys-48-linked is involved in protein degradation via the proteasome; Lys-63-linked is involved in endocytosis, DNA-damage responses as well as in signaling processes leading to activation of the transcription factor NF-kappa-B. Linear polymer chains formed via attachment by the initiator Met lead to cell signaling. Ubiquitin is usually conjugated to Lys residues of target proteins, however, in rare cases, conjugation to Cys or Ser residues has been observed. When polyubiquitin is free (unanchored-polyubiquitin), it also has distinct roles, such as in activation of protein kinases, and in signaling. Its function is as follows. Component of the 60S subunit of the ribosome. This is Ubiquitin-ribosomal protein eL40 fusion protein (UBA52) from Gallus gallus (Chicken).